A 664-amino-acid polypeptide reads, in one-letter code: Serine/threonine-protein kinase PknD (664 aa).

The Cytoplasmic portion of the chain corresponds to 1–381 (MSDAVPQVGS…PAGNKRKVWA (381 aa)). The region spanning 15–276 (YQLLRLLGRG…DLAIAAHDAL (262 aa)) is the Protein kinase domain. Residues 21–29 (LGRGGMGEV) and K44 contribute to the ATP site. At T135 the chain carries Phosphothreonine; by autocatalysis. Residue D138 is the Proton acceptor of the active site. 4 positions are modified to phosphothreonine; by autocatalysis: T169, T171, T173, and T209. The segment at 303 to 333 (TGLSQSESGIAGAGTGPPTPGAARWSPGDSA) is disordered. A helical membrane pass occupies residues 382-402 (VVGAAAIVLVAIVAAAGYLVL). Over 403–664 (RPSWSPTQAS…GNDRVVKLTS (262 aa)) the chain is Extracellular. NHL repeat units follow at residues 414–456 (QTVL…LATG), 457–497 (STGT…LAAG), 498–539 (SNNQ…LAAG), 540–581 (SKTQ…LEAE), 582–623 (SNNQ…LLAG), and 624–664 (STTS…KLTS).

Belongs to the protein kinase superfamily. Ser/Thr protein kinase family. In terms of assembly, homodimer. The extracellular domain interacts with host laminin. Post-translationally, autophosphorylated. Dephosphorylated by PstP.

The protein resides in the cell membrane. The catalysed reaction is L-seryl-[protein] + ATP = O-phospho-L-seryl-[protein] + ADP + H(+). The enzyme catalyses L-threonyl-[protein] + ATP = O-phospho-L-threonyl-[protein] + ADP + H(+). With respect to regulation, dimerization activates the kinase domain of unphosphorylated PknD via an allosteric mechanism, triggering autophosphorylation and phosphorylation of target proteins. Phosphorylated PknD is fully active even in the absence of dimerization. Part of a signaling pathway that enables adaptation to osmotic stress through cell wall remodeling and virulence factor production. Functionally, key microbial factor required for central nervous system tuberculosis. Required for invasion of host brain endothelia, but not macrophages, lung epithelia or other endothelia. The polypeptide is Serine/threonine-protein kinase PknD (pknD) (Mycobacterium tuberculosis (strain CDC 1551 / Oshkosh)).